The following is a 42-amino-acid chain: MNNPNQPVSYPIFTVRWLAIHAIGIPAVFFIGSITAMQFIQR.

The chain crosses the membrane as a helical span at residues 17–33; the sequence is WLAIHAIGIPAVFFIGS. His21 is a binding site for heme.

This sequence belongs to the PsbE/PsbF family. As to quaternary structure, heterodimer of an alpha subunit and a beta subunit. PSII is composed of 1 copy each of membrane proteins PsbA, PsbB, PsbC, PsbD, PsbE, PsbF, PsbH, PsbI, PsbJ, PsbK, PsbL, PsbM, PsbT, PsbX, PsbY, PsbZ, Psb30/Ycf12, at least 3 peripheral proteins of the oxygen-evolving complex and a large number of cofactors. It forms dimeric complexes. Heme b is required as a cofactor.

It is found in the plastid. The protein localises to the cyanelle thylakoid membrane. Functionally, this b-type cytochrome is tightly associated with the reaction center of photosystem II (PSII). PSII is a light-driven water:plastoquinone oxidoreductase that uses light energy to abstract electrons from H(2)O, generating O(2) and a proton gradient subsequently used for ATP formation. It consists of a core antenna complex that captures photons, and an electron transfer chain that converts photonic excitation into a charge separation. The protein is Cytochrome b559 subunit beta of Cyanophora paradoxa.